Here is a 261-residue protein sequence, read N- to C-terminus: uncharacterized protein (261 aa).

The segment at 1–22 (MAETTEPPSDAGTSQADAMALA) is disordered. The helical transmembrane segment at 107-127 (IAMAAAVVIICGFTGLSGYIV) threads the bilayer.

To M.tuberculosis Rv1362c.

The protein localises to the membrane. This is an uncharacterized protein from Mycobacterium tuberculosis (strain ATCC 25618 / H37Rv).